Here is a 192-residue protein sequence, read N- to C-terminus: Iodate reductase subunit IdrB (192 aa).

The segment at residues 1–52 (MSENIIPVRAVPAHDHEHDGERACMSRRRFLLFGGTSVALLSIASLPGVAQV) is a signal peptide (tat-type signal). The Rieske domain maps to 102–173 (GADKDIVAFN…LEVQGDDIYA (72 aa)). [2Fe-2S] cluster contacts are provided by cysteine 114, histidine 116, cysteine 135, and histidine 138.

Belongs to the AOX family. The iodate reductase (Idr) complex is composed of a molybdopterin-dependent iodate reductase (IdrA and IdrB subunits) and two associated peroxidases (IdrP1 and IdrP2). [2Fe-2S] cluster is required as a cofactor. Post-translationally, predicted to be exported by the Tat system. The position of the signal peptide cleavage has not been experimentally proven.

Its subcellular location is the periplasm. Involved in iodate respiration. Probably catalyzes the reduction of iodate (IO(3)(-)) to hypoiodous acid (HIO) and H(2)O(2), using a reduced cytochrome c as the electron donor. In Pseudomonas sp. (strain SCT), this protein is Iodate reductase subunit IdrB.